The sequence spans 198 residues: UPF0314 protein Saro_1818 (198 aa).

5 helical membrane passes run 13 to 33 (GGSLAAFGVGLAVVIILLGMG), 62 to 82 (WYSFSHLIHGFLFYGAAHIVW), 96 to 116 (LALAVLIEGSWEILENSPIII), 153 to 173 (APVLVTVVLGIGFELFTLWAI), and 177 to 197 (LALNILMLVWPVEAVRVWQGG).

The protein belongs to the UPF0314 family.

It is found in the cell membrane. The polypeptide is UPF0314 protein Saro_1818 (Novosphingobium aromaticivorans (strain ATCC 700278 / DSM 12444 / CCUG 56034 / CIP 105152 / NBRC 16084 / F199)).